Consider the following 203-residue polypeptide: ATP-dependent Clp protease proteolytic subunit (203 aa).

The active-site Nucleophile is the serine 107. Histidine 132 is an active-site residue.

This sequence belongs to the peptidase S14 family. In terms of assembly, fourteen ClpP subunits assemble into 2 heptameric rings which stack back to back to give a disk-like structure with a central cavity, resembling the structure of eukaryotic proteasomes.

The protein resides in the cytoplasm. The enzyme catalyses Hydrolysis of proteins to small peptides in the presence of ATP and magnesium. alpha-casein is the usual test substrate. In the absence of ATP, only oligopeptides shorter than five residues are hydrolyzed (such as succinyl-Leu-Tyr-|-NHMec, and Leu-Tyr-Leu-|-Tyr-Trp, in which cleavage of the -Tyr-|-Leu- and -Tyr-|-Trp bonds also occurs).. Functionally, cleaves peptides in various proteins in a process that requires ATP hydrolysis. Has a chymotrypsin-like activity. Plays a major role in the degradation of misfolded proteins. The polypeptide is ATP-dependent Clp protease proteolytic subunit (Thermotoga maritima (strain ATCC 43589 / DSM 3109 / JCM 10099 / NBRC 100826 / MSB8)).